Consider the following 314-residue polypeptide: Ribosomal protein uL3 glutamine methyltransferase (314 aa).

It belongs to the protein N5-glutamine methyltransferase family. PrmB subfamily.

It carries out the reaction L-glutaminyl-[ribosomal protein uL3] + S-adenosyl-L-methionine = N(5)-methyl-L-glutaminyl-[ribosomal protein uL3] + S-adenosyl-L-homocysteine + H(+). Methylates large ribosomal subunit protein uL3 on a specific glutamine residue. The chain is Ribosomal protein uL3 glutamine methyltransferase from Francisella tularensis subsp. tularensis (strain SCHU S4 / Schu 4).